Consider the following 137-residue polypeptide: Small ribosomal subunit protein uS11 (137 aa).

The disordered stretch occupies residues 116 to 137 (EDVTPIPHDGTRPKGGRRGRRV).

It belongs to the universal ribosomal protein uS11 family. In terms of assembly, part of the 30S ribosomal subunit.

In terms of biological role, located on the platform of the 30S subunit. This chain is Small ribosomal subunit protein uS11, found in Pyrococcus furiosus (strain ATCC 43587 / DSM 3638 / JCM 8422 / Vc1).